A 229-amino-acid polypeptide reads, in one-letter code: Cytochrome c oxidase subunit 2 (229 aa).

The Mitochondrial intermembrane segment spans residues 1–26 (MATWSNLGLQDSASPLMEQLNFFHDH). The helical transmembrane segment at 27-48 (TLLILIMITILVGYLMLMLFFN) threads the bilayer. Over 49 to 62 (KFTNRFLLHGQTIE) the chain is Mitochondrial matrix. A helical transmembrane segment spans residues 63–82 (IIWTILPAIVLMFIALPSLR). The Mitochondrial intermembrane segment spans residues 83-229 (ILYLLDEINS…IKWITAMNSN (147 aa)). Residues histidine 161, cysteine 196, glutamate 198, cysteine 200, histidine 204, and methionine 207 each coordinate Cu cation. A Mg(2+)-binding site is contributed by glutamate 198.

It belongs to the cytochrome c oxidase subunit 2 family. As to quaternary structure, component of the cytochrome c oxidase (complex IV, CIV), a multisubunit enzyme composed of a catalytic core of 3 subunits and several supernumerary subunits. The complex exists as a monomer or a dimer and forms supercomplexes (SCs) in the inner mitochondrial membrane with ubiquinol-cytochrome c oxidoreductase (cytochrome b-c1 complex, complex III, CIII). Cu cation is required as a cofactor.

It localises to the mitochondrion inner membrane. It catalyses the reaction 4 Fe(II)-[cytochrome c] + O2 + 8 H(+)(in) = 4 Fe(III)-[cytochrome c] + 2 H2O + 4 H(+)(out). Component of the cytochrome c oxidase, the last enzyme in the mitochondrial electron transport chain which drives oxidative phosphorylation. The respiratory chain contains 3 multisubunit complexes succinate dehydrogenase (complex II, CII), ubiquinol-cytochrome c oxidoreductase (cytochrome b-c1 complex, complex III, CIII) and cytochrome c oxidase (complex IV, CIV), that cooperate to transfer electrons derived from NADH and succinate to molecular oxygen, creating an electrochemical gradient over the inner membrane that drives transmembrane transport and the ATP synthase. Cytochrome c oxidase is the component of the respiratory chain that catalyzes the reduction of oxygen to water. Electrons originating from reduced cytochrome c in the intermembrane space (IMS) are transferred via the dinuclear copper A center (CU(A)) of subunit 2 and heme A of subunit 1 to the active site in subunit 1, a binuclear center (BNC) formed by heme A3 and copper B (CU(B)). The BNC reduces molecular oxygen to 2 water molecules using 4 electrons from cytochrome c in the IMS and 4 protons from the mitochondrial matrix. This Simulium vittatum (Striped black fly) protein is Cytochrome c oxidase subunit 2 (COII).